Consider the following 337-residue polypeptide: MPQDVDFHIPLPGRQSPDFARADAEQLAWPRSLGLINSEAAAERHLRGGYADLASRFYPHATGADLDLGVDLMSWFFLFDDLFDGPRGENPQETKQLTDAVAAALDGPLPDTAPPIAHGFADIWRRTSEGMTPAWCARSARHWRSYFDGYVDEAESRFWDTPYDSAAQYLAVRRQTIGVQPTVDLAERAGRFEVPHRVFDSAVLSAMLQIAVDVNLLLNDIASLEKEEARGEQNNMVMILRREHGWSKDRSVAHIQSEVRVRLEQYLVLESCLPQVGDIYRLDDAEREALERYRDDAVRTVIRGSYDWHRSSGRYDAEFALAAGAQGYLEELGRITH.

Asp-80, Asp-84, Asn-219, Ser-223, and Glu-227 together coordinate Mg(2+). The short motif at 80–84 (DDLFD) is the DDXXD motif element.

This sequence belongs to the terpene synthase family. Monomer. Mg(2+) is required as a cofactor.

The enzyme catalyses (2E,6E)-farnesyl diphosphate = pentalenene + diphosphate. It participates in sesquiterpene biosynthesis; pentalenene biosynthesis; pentalenene from farnesyl diphosphate: step 1/1. It functions in the pathway antibiotic biosynthesis; pentalenolactone biosynthesis. Its function is as follows. Catalyzes the cyclization of farnesyl diphosphate (FPP) to the tricyclic sesquiterpene pentalenene, which is the hydrocarbon precursor of the pentalenolactone family of antibiotics produced by a variety of Streptomyces species. The protein is Pentalenene synthase (pntA) of Streptomyces arenae.